The primary structure comprises 83 residues: Putative defensin-like protein 110 (83 aa).

Positions 1–24 (MAITKKNLIAFVFTILFVISYVHC) are cleaved as a signal peptide. Disulfide bonds link cysteine 43–cysteine 81, cysteine 49–cysteine 73, cysteine 59–cysteine 79, and cysteine 63–cysteine 80.

This sequence belongs to the DEFL family.

It localises to the secreted. This chain is Putative defensin-like protein 110, found in Arabidopsis thaliana (Mouse-ear cress).